The chain runs to 350 residues: MQVSDFHFDLPDELIARYPQPERTASRLLQMDGNTGELIDGTFSDVLEQVQAGDLVVFNNTRVIPARLFGRKESGGKLEVLVERMLNEKSILAHVRCSKSPKPGTTILVGENDEYSAQMVARHDALFELKFNSDKTVLEILEEIGHMPLPPYIDRPDEDADKERYQTVYNQKPGAVAAPTAGLHFDDVLLEKITAKGAEFAYVTLHVGAGTFQPVKVDDIDDHHMHAEYVEVPQDVVDAINATKARGGRVVAVGTTSVRSLESAAQDALKKGTELVPFFGDTEIFIYPGYEYQLVDCLITNFHLPESTLIMLVSAFAGYENTMNAYKHAVENKYRFFSYGDSMFIKKKTA.

The protein belongs to the QueA family. Monomer.

Its subcellular location is the cytoplasm. It carries out the reaction 7-aminomethyl-7-carbaguanosine(34) in tRNA + S-adenosyl-L-methionine = epoxyqueuosine(34) in tRNA + adenine + L-methionine + 2 H(+). It functions in the pathway tRNA modification; tRNA-queuosine biosynthesis. Its function is as follows. Transfers and isomerizes the ribose moiety from AdoMet to the 7-aminomethyl group of 7-deazaguanine (preQ1-tRNA) to give epoxyqueuosine (oQ-tRNA). The sequence is that of S-adenosylmethionine:tRNA ribosyltransferase-isomerase from Vibrio campbellii (strain ATCC BAA-1116).